The chain runs to 331 residues: Large ribosomal subunit protein uL3 (331 aa).

The protein belongs to the universal ribosomal protein uL3 family. In terms of assembly, part of the 50S ribosomal subunit. Forms a cluster with proteins L14 and L24e.

In terms of biological role, one of the primary rRNA binding proteins, it binds directly near the 3'-end of the 23S rRNA, where it nucleates assembly of the 50S subunit. This chain is Large ribosomal subunit protein uL3, found in Thermoplasma acidophilum (strain ATCC 25905 / DSM 1728 / JCM 9062 / NBRC 15155 / AMRC-C165).